Consider the following 350-residue polypeptide: MAEDSEWVPESIAGFLGSPDWLIPLAEFMESRCSVFDDEDENKLTYTEIHQQYKQLVERLLENYMQDVGISEQQFLEACSSFSSSASLQTVFQPVLATDDFQMFRSLMVQKNMELQLQALHVIKQRNGGLPECLTDGVDVMSELEQQEMKILQEVLRRSKEEYDLQMGQCGLGSEDLASTSSSVSETPQNPEQRLSNGVSDPLTLTQPDSEMEESSTATQRKMEESEPTATTACKSKALPAVRAPLRGSVVAKQSSAERERELERARDTHTDCRTLTDEVALQQRSEYLKQQRDKLQALKRQTGKGLTDTAAAAAPEPKPATQEISVEEKKKLQKRKHVAEKLKEEVIKK.

The stretch at 142-167 (SELEQQEMKILQEVLRRSKEEYDLQM) forms a coiled coil. 2 disordered regions span residues 171-233 (GLGS…ATTA) and 301-337 (RQTG…QKRK). Residues 177-220 (LASTSSSVSETPQNPEQRLSNGVSDPLTLTQPDSEMEESSTATQ) show a composition bias toward polar residues. A coiled-coil region spans residues 280 to 350 (VALQQRSEYL…EKLKEEVIKK (71 aa)).

The protein belongs to the CFAP36 family.

It localises to the nucleus. It is found in the cytoplasm. Its subcellular location is the cell projection. The protein resides in the cilium. The protein localises to the flagellum. This Danio rerio (Zebrafish) protein is Cilia- and flagella-associated protein 36.